The sequence spans 342 residues: Trans-3-hydroxy-L-proline dehydratase (342 aa).

Residue serine 90 is the Proton acceptor of the active site. Substrate contacts are provided by residues 91–92 (GS), aspartate 251, and 256–257 (GT).

The protein belongs to the proline racemase family.

The catalysed reaction is trans-3-hydroxy-L-proline = 1-pyrroline-2-carboxylate + H2O. In terms of biological role, catalyzes the dehydration of trans-3-hydroxy-L-proline (t3LHyp) to Delta(1)-pyrroline-2-carboxylate (Pyr2C). Is likely involved in a degradation pathway that converts t3LHyp to L-proline, which would allow P.denitrificans to grow on t3LHyp as a sole carbon source. Displays neither proline racemase activity nor 4-hydroxyproline 2-epimerase activity. This chain is Trans-3-hydroxy-L-proline dehydratase, found in Paracoccus denitrificans (strain Pd 1222).